A 119-amino-acid polypeptide reads, in one-letter code: Protein FAM24A-like (119 aa).

The signal sequence occupies residues 1–40 (MYKPFDLRTIITIIIGCGILTAMFLLIGLVLCLYSKISKA).

This sequence belongs to the FAM24 family.

It localises to the secreted. The polypeptide is Protein FAM24A-like (Mus musculus (Mouse)).